A 422-amino-acid chain; its full sequence is Probable protein phosphatase 2C 69 (422 aa).

The PPM-type phosphatase domain maps to 45-294; sequence TLLLAEAGER…DDTTCIVVDI (250 aa). 4 residues coordinate Mn(2+): aspartate 70, glycine 71, aspartate 246, and aspartate 285.

Belongs to the PP2C family. Requires Mg(2+) as cofactor. Mn(2+) serves as cofactor.

It carries out the reaction O-phospho-L-seryl-[protein] + H2O = L-seryl-[protein] + phosphate. It catalyses the reaction O-phospho-L-threonyl-[protein] + H2O = L-threonyl-[protein] + phosphate. The sequence is that of Probable protein phosphatase 2C 69 from Oryza sativa subsp. japonica (Rice).